Consider the following 261-residue polypeptide: Indole-3-glycerol phosphate synthase (261 aa).

This sequence belongs to the TrpC family.

It catalyses the reaction 1-(2-carboxyphenylamino)-1-deoxy-D-ribulose 5-phosphate + H(+) = (1S,2R)-1-C-(indol-3-yl)glycerol 3-phosphate + CO2 + H2O. The protein operates within amino-acid biosynthesis; L-tryptophan biosynthesis; L-tryptophan from chorismate: step 4/5. The polypeptide is Indole-3-glycerol phosphate synthase (Burkholderia ambifaria (strain MC40-6)).